Consider the following 356-residue polypeptide: Aminodeoxyfutalosine deaminase (356 aa).

Zn(2+) contacts are provided by His18 and His20. 3 residues coordinate substrate: Arg73, Glu140, and Gly172. A Zn(2+)-binding site is contributed by His199. Glu202 acts as the Proton donor in catalysis. Asp287 contacts Zn(2+).

It belongs to the metallo-dependent hydrolases superfamily. Adenosine and AMP deaminases family. The cofactor is Zn(2+).

It catalyses the reaction 6-amino-6-deoxyfutalosine + H2O + H(+) = futalosine + NH4(+). It functions in the pathway quinol/quinone metabolism; menaquinone biosynthesis. In terms of biological role, catalyzes the deamination of aminodeoxyfutalosine (AFL) into futalosine (FL), a step in the biosynthesis of menaquinone (MK, vitamin K2). Is very poorly efficient on 1-(6-amino-9H-purin-9-yl)-1-deoxy-N-ethyl-beta-D-ribofuranuronamide (NECA), adenosine, 5'-methylthioadenosine, 5'-deoxyadenosine, 2'-deoxyadenosine, and AMP as substrate. In Acidothermus cellulolyticus (strain ATCC 43068 / DSM 8971 / 11B), this protein is Aminodeoxyfutalosine deaminase.